A 165-amino-acid chain; its full sequence is 6,7-dimethyl-8-ribityllumazine synthase (165 aa).

Residues Tyr-30, 61–63 (ALE), and 90–92 (VVI) each bind 5-amino-6-(D-ribitylamino)uracil. 95-96 (ET) serves as a coordination point for (2S)-2-hydroxy-3-oxobutyl phosphate. His-98 functions as the Proton donor in the catalytic mechanism. Asn-123 contacts 5-amino-6-(D-ribitylamino)uracil. Arg-137 is a binding site for (2S)-2-hydroxy-3-oxobutyl phosphate.

It belongs to the DMRL synthase family.

The enzyme catalyses (2S)-2-hydroxy-3-oxobutyl phosphate + 5-amino-6-(D-ribitylamino)uracil = 6,7-dimethyl-8-(1-D-ribityl)lumazine + phosphate + 2 H2O + H(+). The protein operates within cofactor biosynthesis; riboflavin biosynthesis; riboflavin from 2-hydroxy-3-oxobutyl phosphate and 5-amino-6-(D-ribitylamino)uracil: step 1/2. Catalyzes the formation of 6,7-dimethyl-8-ribityllumazine by condensation of 5-amino-6-(D-ribitylamino)uracil with 3,4-dihydroxy-2-butanone 4-phosphate. This is the penultimate step in the biosynthesis of riboflavin. The sequence is that of 6,7-dimethyl-8-ribityllumazine synthase from Xanthobacter autotrophicus (strain ATCC BAA-1158 / Py2).